Here is a 466-residue protein sequence, read N- to C-terminus: Aladin (466 aa).

5 WD repeats span residues Trp135–Thr174, Pro179–Arg218, Pro229–Leu269, Arg271–Arg310, and Leu378–Gln418.

The protein resides in the nucleus. It localises to the nuclear pore complex. It is found in the cytoplasm. Its subcellular location is the cytoskeleton. The protein localises to the spindle. In terms of biological role, involved in mitotic spindle assembly. This is Aladin from Drosophila melanogaster (Fruit fly).